The following is a 311-amino-acid chain: Malate dehydrogenase (311 aa).

NAD(+) is bound by residues 7–13 (GAAGGIG) and Asp-34. The substrate site is built by Arg-81 and Arg-87. NAD(+) is bound by residues Asn-94 and 117 to 119 (ITN). Residues Asn-119 and Arg-153 each contribute to the substrate site. His-177 acts as the Proton acceptor in catalysis. Met-227 lines the NAD(+) pocket.

The protein belongs to the LDH/MDH superfamily. MDH type 1 family. Homodimer.

It carries out the reaction (S)-malate + NAD(+) = oxaloacetate + NADH + H(+). Functionally, catalyzes the reversible oxidation of malate to oxaloacetate. The sequence is that of Malate dehydrogenase from Histophilus somni (strain 2336) (Haemophilus somnus).